The sequence spans 450 residues: Phosphoglucosamine mutase (450 aa).

The active-site Phosphoserine intermediate is S107. Residues S107, D246, D248, and D250 each contribute to the Mg(2+) site. A Phosphoserine modification is found at S107.

This sequence belongs to the phosphohexose mutase family. The cofactor is Mg(2+). In terms of processing, activated by phosphorylation.

The catalysed reaction is alpha-D-glucosamine 1-phosphate = D-glucosamine 6-phosphate. In terms of biological role, catalyzes the conversion of glucosamine-6-phosphate to glucosamine-1-phosphate. In Dechloromonas aromatica (strain RCB), this protein is Phosphoglucosamine mutase.